The chain runs to 136 residues: Small ribosomal subunit protein uS8 (136 aa).

Belongs to the universal ribosomal protein uS8 family. Part of the 30S ribosomal subunit. Contacts proteins S5 and S12.

Its function is as follows. One of the primary rRNA binding proteins, it binds directly to 16S rRNA central domain where it helps coordinate assembly of the platform of the 30S subunit. This Synechococcus sp. (strain JA-2-3B'a(2-13)) (Cyanobacteria bacterium Yellowstone B-Prime) protein is Small ribosomal subunit protein uS8.